The sequence spans 65 residues: Precursor peptide TigB (65 aa).

TIGSVS motif repeat units follow at residues T16–S21, T23–S28, T33–S38, T40–S45, T47–S52, and T54–S59. I17, I24, I34, I41, I48, and I55 each carry methylcyclopropylglycine.

In terms of processing, is subject to maturation by TigE, that catalyzes the formation of methylcyclopropylglycine (mCPG) residues from isoleucine residues residing in the repeating TIGSVS motifs.

Precursor peptide which undergoes post-translational modifications by tailoring enzymes, leading to the mature natural product. In Paramaledivibacter caminithermalis (strain DSM 15212 / CIP 107654 / DViRD3) (Clostridium caminithermale), this protein is Precursor peptide TigB.